We begin with the raw amino-acid sequence, 483 residues long: MKTKLFINNAWIDSSDQQTFERIHPVSSDVVTESANATVTDAIKAAQAAEEAFKTWKAVGPSERRRLLLKVADVMESKTPKFIEVMAMEVGASALWAGFNVHASANVFREAASLATQIQGETIPTDKAETLSMTLRQPVGPILSIVPWNGTAVLAARAIAYPLVCGNTVVFKGSEFSPATHALITQCVQEAGLPAGVLNYLNSSPDRSPEIADALISAKEIRRINFTGSTRVGSIIAQKAAQHLKRCLLELGGKSPLIVLDDADIDAAVKAAVFGSFLFQGQICMSTERLIVDEKIADEFVAKFVEKTKRLSAGDPCVTGDCIIGPMVSPNSGERINGLFKDAIDKGAKVVCGGLAQGALMPATILDHVKSDMRIYDEETFGPITVVIRCKGEAEAVRIANDSVYGLSSGVFGRDINRALRVGMSIEYGSVHINGSTVQNEAQAPYGGTKNTGYGRFDGRAVIDEFTEIKWLTIEPFEQQYPF.

228-233 (GSTRVG) is an NAD(+) binding site. Active-site residues include glutamate 250 and cysteine 284.

This sequence belongs to the aldehyde dehydrogenase family.

It carries out the reaction salicylaldehyde + NAD(+) + H2O = salicylate + NADH + 2 H(+). It functions in the pathway aromatic compound metabolism; naphthalene degradation. The polypeptide is Salicylaldehyde dehydrogenase (nahF) (Pseudomonas putida (Arthrobacter siderocapsulatus)).